The following is a 69-amino-acid chain: uncharacterized protein (69 aa).

The N-terminal stretch at 1 to 21 (MELLIPLSLLGLYLFSGTRDS) is a signal peptide. N41 is a glycosylation site (N-linked (GlcNAc...) asparagine).

The protein localises to the secreted. This is an uncharacterized protein from Dictyostelium discoideum (Social amoeba).